The following is a 310-amino-acid chain: Putative HTH-type transcriptional regulatory protein LS215_1371 (310 aa).

The HTH cro/C1-type domain maps to 125–180; the sequence is LKHKREEMGYSIGDVAKFLGVSRKAIYDYEKGDSDVSLEVAEKLIDLFGDDIIGDV. The segment at residues 136-155 is a DNA-binding region (H-T-H motif); that stretch reads IGDVAKFLGVSRKAIYDYEK.

The sequence is that of Putative HTH-type transcriptional regulatory protein LS215_1371 from Saccharolobus islandicus (strain L.S.2.15 / Lassen #1) (Sulfolobus islandicus).